Reading from the N-terminus, the 99-residue chain is MNYWHSAIATFGIGDTVTTIIGLSMAGIYEANPAANTILGELGLFGIIAAKVLYFGLMYIIVKSMPEHSRKYGPITITVLGTLICLWNIAIIATQVLGF.

Helical transmembrane passes span 8–28 (IATF…MAGI), 42–62 (LGLF…YIIV), and 73–93 (GPIT…AIIA).

The protein resides in the host membrane. The protein is Putative transmembrane protein ORF13 of His1 virus (isolate Australia/Victoria) (His1V).